We begin with the raw amino-acid sequence, 385 residues long: 1-deoxy-D-xylulose 5-phosphate reductoisomerase (385 aa).

Thr10, Gly11, Ser12, Ile13, and Asn124 together coordinate NADPH. Lys125 contributes to the 1-deoxy-D-xylulose 5-phosphate binding site. An NADPH-binding site is contributed by Glu126. Asp150 provides a ligand contact to Mn(2+). Residues Ser151, Glu152, Ser176, and His199 each coordinate 1-deoxy-D-xylulose 5-phosphate. Residue Glu152 coordinates Mn(2+). Gly205 provides a ligand contact to NADPH. Ser212, Asn217, Lys218, and Glu221 together coordinate 1-deoxy-D-xylulose 5-phosphate. Glu221 serves as a coordination point for Mn(2+).

It belongs to the DXR family. It depends on Mg(2+) as a cofactor. Mn(2+) serves as cofactor.

It carries out the reaction 2-C-methyl-D-erythritol 4-phosphate + NADP(+) = 1-deoxy-D-xylulose 5-phosphate + NADPH + H(+). It participates in isoprenoid biosynthesis; isopentenyl diphosphate biosynthesis via DXP pathway; isopentenyl diphosphate from 1-deoxy-D-xylulose 5-phosphate: step 1/6. In terms of biological role, catalyzes the NADPH-dependent rearrangement and reduction of 1-deoxy-D-xylulose-5-phosphate (DXP) to 2-C-methyl-D-erythritol 4-phosphate (MEP). This is 1-deoxy-D-xylulose 5-phosphate reductoisomerase from Clostridium botulinum (strain Eklund 17B / Type B).